The sequence spans 430 residues: Acetyl-CoA acetyltransferase FG05087, mitochondrial (430 aa).

Residues 1–32 (MTVTQLRSAGRLAQLAGHVNGARQFSTRPALR) constitute a mitochondrion transit peptide. The Acyl-thioester intermediate role is filled by Cys-122. Residue Tyr-217 participates in K(+) binding. Residue Lys-260 participates in CoA binding. A K(+)-binding site is contributed by Ala-278. Ser-282 lines the CoA pocket. Residues His-385 and Cys-413 each act as proton acceptor in the active site. Chloride is bound at residue Asn-414.

Belongs to the thiolase-like superfamily. Thiolase family. As to quaternary structure, homotetramer. The cofactor is K(+).

Its subcellular location is the mitochondrion. The catalysed reaction is 2 acetyl-CoA = acetoacetyl-CoA + CoA. In terms of biological role, mitochondrial acetyl-CoA acetyltransferase that catalyzes both the formation and degradation of acetoacetyl-CoA. Seems not to be involved in ergosterol biosynthesis. Plays an important role in growth, morphogenesis and maintaining mitochondrial function including the response to oxidative stresses. The protein is Acetyl-CoA acetyltransferase FG05087, mitochondrial of Gibberella zeae (strain ATCC MYA-4620 / CBS 123657 / FGSC 9075 / NRRL 31084 / PH-1) (Wheat head blight fungus).